The chain runs to 688 residues: Glycine--tRNA ligase beta subunit (688 aa).

The protein belongs to the class-II aminoacyl-tRNA synthetase family. As to quaternary structure, tetramer of two alpha and two beta subunits.

Its subcellular location is the cytoplasm. The catalysed reaction is tRNA(Gly) + glycine + ATP = glycyl-tRNA(Gly) + AMP + diphosphate. This chain is Glycine--tRNA ligase beta subunit, found in Colwellia psychrerythraea (strain 34H / ATCC BAA-681) (Vibrio psychroerythus).